The primary structure comprises 635 residues: Cationic amino acid transporter 2, vacuolar (635 aa).

Over 1-48 (MGFLVDTQKEGGGHSWGYVRSLVRRKQVDSANGQSHGHQLARALTVPH) the chain is Cytoplasmic. The chain crosses the membrane as a helical span at residues 49–69 (LVAIGVGATIGAGVYILVGTV). Residues 70–76 (AREHSGP) are Vacuolar-facing. A helical transmembrane segment spans residues 77–97 (SLALSFLIAGIAAGLSAFCYA). The Cytoplasmic portion of the chain corresponds to 98-108 (ELSSRCPSAGS). The helical transmembrane segment at 109–131 (AYHYSYICVGEGVAWIIGWALIL) threads the bilayer. Over 132–171 (EYTIGGSAVARGISPNLALIFGGEDGLPAILARHQIPGLD) the chain is Vacuolar. The chain crosses the membrane as a helical span at residues 172-192 (IVVDPCAAILVFVVTGLLCMG). Residues 193-200 (IKESTFAQ) lie on the Cytoplasmic side of the membrane. The chain crosses the membrane as a helical span at residues 201–221 (GIVTAVNVCVLLFVIVAGSYL). At 222 to 235 (GFKTGWPGYELPTG) the chain is on the vacuolar side. The chain crosses the membrane as a helical span at residues 236 to 256 (FFPFGVDGMFAGSATVFFAFI). The Cytoplasmic portion of the chain corresponds to 257-280 (GFDSVASTAEEVRNPQRDLPIGIG). The chain crosses the membrane as a helical span at residues 281-301 (LALLLCCSLYMMVSIVIVGLI). Over 302 to 324 (PYYAMDPDTPISSAFASHDMQWA) the chain is Vacuolar. The helical transmembrane segment at 325–345 (VYLITLGAVMALCSALMGALL) threads the bilayer. Residues 346–376 (PQPRILMAMARDGLLPSIFSDINKRTQVPVK) are Cytoplasmic-facing. A helical membrane pass occupies residues 377–397 (ATVATGLCAATLAFFMDVSQL). A topological domain (vacuolar) is located at residue Ala-398. Residues 399–419 (GMVSVGTLLAFTMVAISVLIL) form a helical membrane-spanning segment. Residues 420–493 (RYVPPDEQPL…CLVLSEETRR (74 aa)) are Cytoplasmic-facing. A helical membrane pass occupies residues 494–514 (IVAGWSIMFTCVGAFLLSYAA). Residues 515–524 (SSLSFPGLIR) lie on the Vacuolar side of the membrane. The helical transmembrane segment at 525–545 (YPLCGVGGCLLLAGLIALSSI) threads the bilayer. Over 546-560 (DQDDARHTFGHSGGY) the chain is Cytoplasmic. The helical transmembrane segment at 561–581 (MCPFVPLLPIICILINMYLLV) threads the bilayer. Residues 582–585 (NLGS) are Vacuolar-facing. A helical transmembrane segment spans residues 586-606 (ATWARVSVWLLIGVIVYVFYG). The Cytoplasmic segment spans residues 607–635 (RKNSSLANAVYVTTAHAEEIYREHEGSLA).

It belongs to the amino acid-polyamine-organocation (APC) superfamily. Cationic amino acid transporter (CAT) (TC 2.A.3.3) family. In terms of tissue distribution, expressed in roots, stems, flowers, leaves, and siliques.

It is found in the vacuole membrane. Functionally, permease involved in the transport of the cationic amino acids. The chain is Cationic amino acid transporter 2, vacuolar (CAT2) from Arabidopsis thaliana (Mouse-ear cress).